The primary structure comprises 70 residues: Large ribosomal subunit protein bL28c (70 aa).

Belongs to the bacterial ribosomal protein bL28 family.

The protein localises to the plastid. It is found in the cyanelle. The protein is Large ribosomal subunit protein bL28c (rpl28) of Cyanophora paradoxa.